The sequence spans 1020 residues: Protein translocase subunit SecA (1020 aa).

ATP-binding positions include glutamine 143, 161–165, and aspartate 661; that span reads GEGKT. Residues 974-1020 are disordered; the sequence is SVYNASPGAENEAPLQRPVTADSKPGRNDPCPCGSGKKYKNCHGQQP. Cysteine 1004, cysteine 1006, cysteine 1015, and histidine 1016 together coordinate Zn(2+).

This sequence belongs to the SecA family. In terms of assembly, monomer and homodimer. Part of the essential Sec protein translocation apparatus which comprises SecA, SecYEG and auxiliary proteins SecDF. Other proteins may also be involved. Requires Zn(2+) as cofactor.

It is found in the cell inner membrane. The protein resides in the cytoplasm. The catalysed reaction is ATP + H2O + cellular proteinSide 1 = ADP + phosphate + cellular proteinSide 2.. Functionally, part of the Sec protein translocase complex. Interacts with the SecYEG preprotein conducting channel. Has a central role in coupling the hydrolysis of ATP to the transfer of proteins into and across the cell membrane, serving as an ATP-driven molecular motor driving the stepwise translocation of polypeptide chains across the membrane. This is Protein translocase subunit SecA from Chlorobium phaeovibrioides (strain DSM 265 / 1930) (Prosthecochloris vibrioformis (strain DSM 265)).